Consider the following 309-residue polypeptide: MATRTESKKQIPPYMKAVSGSLGGVVEACCLQPIDVIKTRLQLDRVGAYKGIAHCGSKVVRTEGVRALWKGLTPFATHLTLKYTLRMGSNAMFQTAFKDSETGKVSNRGRFLSGFGAGVLEALAIVTPFEVVKIRLQQQKGLSPELFKYKGPIHCARTIVREESILGLWSGAAPTVMRNGTNQAVMFTAKNAFDILLWNKHEGDGKILQPWQSMISGFLAGTAGPFCTGPFDVVKTRLMAQSRDSEGGIRYKGMVHAIRTIYAEEGLVALWRGLLPRLMRIPPGQAIMWAVADQVTGLYEMRYLRNAPL.

Solcar repeat units follow at residues 11–96, 108–196, and 208–298; these read IPPY…FQTA, RGRF…FDIL, and LQPW…VTGL. Transmembrane regions (helical) follow at residues 17–37, 65–85, 111–131, 171–191, 214–234, and 273–293; these read AVSG…IDVI, VRAL…KYTL, FLSG…PFEV, GAAP…TAKN, MISG…FDVV, and GLLP…AVAD.

This sequence belongs to the mitochondrial carrier (TC 2.A.29) family. In terms of tissue distribution, expressed in root tips, cotyledons, hypocotyls, leaves, trichomes, stems, flowers, carpels, anthers, pollen and abscission zone of siliques.

Its subcellular location is the mitochondrion inner membrane. Its function is as follows. May transport cytoplasmic succinate, derived from fatty acid oxidation, into the mitochondrial matrix in exchange of fumarate during lipid mobilization in seed germination. Conversion of seed-reserved triacylglycerols into sucrose is necessary for growth before the onset of photosynthesis and involves fatty acid beta-oxidation, the glyoxylate cycle and gluconeogenesis. In Arabidopsis thaliana (Mouse-ear cress), this protein is Mitochondrial succinate-fumarate transporter 1 (SFC1).